The following is a 341-amino-acid chain: S-adenosylmethionine:tRNA ribosyltransferase-isomerase (341 aa).

This sequence belongs to the QueA family. In terms of assembly, monomer.

Its subcellular location is the cytoplasm. It carries out the reaction 7-aminomethyl-7-carbaguanosine(34) in tRNA + S-adenosyl-L-methionine = epoxyqueuosine(34) in tRNA + adenine + L-methionine + 2 H(+). It functions in the pathway tRNA modification; tRNA-queuosine biosynthesis. Functionally, transfers and isomerizes the ribose moiety from AdoMet to the 7-aminomethyl group of 7-deazaguanine (preQ1-tRNA) to give epoxyqueuosine (oQ-tRNA). In Chlorobium phaeovibrioides (strain DSM 265 / 1930) (Prosthecochloris vibrioformis (strain DSM 265)), this protein is S-adenosylmethionine:tRNA ribosyltransferase-isomerase.